The primary structure comprises 251 residues: uncharacterized protein (251 aa).

Residues methionine 1–alanine 25 form the signal peptide. A lipid anchor (N-palmitoyl cysteine) is attached at cysteine 26. Cysteine 26 is lipidated: S-diacylglycerol cysteine.

Belongs to the MG439/MG440 family.

It is found in the cell membrane. This is an uncharacterized protein from Mycoplasma pneumoniae (strain ATCC 29342 / M129 / Subtype 1) (Mycoplasmoides pneumoniae).